The chain runs to 213 residues: dTTP/UTP pyrophosphatase (213 aa).

D92 functions as the Proton acceptor in the catalytic mechanism.

It belongs to the Maf family. YhdE subfamily. The cofactor is a divalent metal cation.

Its subcellular location is the cytoplasm. The catalysed reaction is dTTP + H2O = dTMP + diphosphate + H(+). It carries out the reaction UTP + H2O = UMP + diphosphate + H(+). Its function is as follows. Nucleoside triphosphate pyrophosphatase that hydrolyzes dTTP and UTP. May have a dual role in cell division arrest and in preventing the incorporation of modified nucleotides into cellular nucleic acids. In Granulibacter bethesdensis (strain ATCC BAA-1260 / CGDNIH1), this protein is dTTP/UTP pyrophosphatase.